Here is a 979-residue protein sequence, read N- to C-terminus: Protein SMAX1-LIKE 6 (979 aa).

The Clp R domain maps to 8–190 (ARECLTEEAA…PVTQLSSRFS (183 aa)). Repeat regions lie at residues 12–86 (LTEE…LDRL) and 100–190 (VSNS…SRFS). The EAR motif lies at 833 to 837 (LDLNL).

The protein belongs to the ClpA/ClpB family. As to quaternary structure, interacts with TPL/TPR in an EAR-motif dependent manner. Interacts with TPR3. Interacts with MAX2 and TPR2. Interacts with D14. The interaction with D14 occurs in the presence of (2'R) stereoisomers of strigolactones, but not (2'S) stereoisomers. Post-translationally, ubiquitinated upon strigolactone treatment. Probable proteolytic target of SCF(MAX2)-mediated stigolactone signaling. In terms of tissue distribution, detected in roots, seedlings and axillary branches. Expressed in the primary rosette buds and expanding leaves of adult rosettes, the vasculature of the hypocotyls, cotyledons, and mature roots, and in the midvein and petioles of young leaves.

Its subcellular location is the nucleus. In terms of biological role, probable component of a transcriptional corepressor complex involved in branching control. Regulates cotyledon expansion and lateral root growth, but not germination or hypocotyl elongation. Promotes auxin transport and PIN1 accumulation in the stem and represses BRC1/TCP18 expression in axillary buds. The sequence is that of Protein SMAX1-LIKE 6 from Arabidopsis thaliana (Mouse-ear cress).